Reading from the N-terminus, the 173-residue chain is Protein tyrosine phosphatase type IVA 3 (173 aa).

In terms of domain architecture, Tyrosine-protein phosphatase spans 8–161; the sequence is APVEVSYKNM…YRPKQRLRFK (154 aa). A disulfide bridge connects residues C49 and C104. D72 functions as the Proton donor in the catalytic mechanism. C104 functions as the Phosphocysteine intermediate in the catalytic mechanism. R110 is a binding site for substrate. C170 carries the post-translational modification Cysteine methyl ester. Residue C170 is the site of S-farnesyl cysteine attachment. Residues 171 to 173 constitute a propeptide, removed in mature form; the sequence is CIM.

The protein belongs to the protein-tyrosine phosphatase family. In terms of assembly, interacts with tubulin. Farnesylated. Farnesylation is required for membrane targeting. Unfarnesylated forms are shifted into the nucleus.

Its subcellular location is the cell membrane. It is found in the early endosome. It catalyses the reaction O-phospho-L-tyrosyl-[protein] + H2O = L-tyrosyl-[protein] + phosphate. With respect to regulation, inhibited by sodium orthovanadate and peroxovanadium compounds, and by pentamidine. Its function is as follows. Protein tyrosine phosphatase which stimulates progression from G1 into S phase during mitosis. Enhances cell proliferation, cell motility and invasive activity, and promotes cancer metastasis. May be involved in the progression of cardiac hypertrophy by inhibiting intracellular calcium mobilization in response to angiotensin II. The chain is Protein tyrosine phosphatase type IVA 3 (PTP4A3) from Bos taurus (Bovine).